We begin with the raw amino-acid sequence, 260 residues long: Probable 6-oxopurine nucleoside phosphorylase (260 aa).

Phosphate contacts are provided by residues S9 and 49-50; that span reads RH. M182 is a binding site for substrate. T183 contributes to the phosphate binding site. 206–208 contacts substrate; that stretch reads NMA.

It belongs to the PNP/MTAP phosphorylase family. MTAP subfamily. In terms of assembly, homohexamer. Dimer of a homotrimer.

It catalyses the reaction a purine D-ribonucleoside + phosphate = a purine nucleobase + alpha-D-ribose 1-phosphate. It functions in the pathway purine metabolism; purine nucleoside salvage. In terms of biological role, purine nucleoside phosphorylase which is highly specific for 6-oxopurine nucleosides. Cleaves guanosine or inosine to respective bases and sugar-1-phosphate molecules. Involved in purine salvage. The polypeptide is Probable 6-oxopurine nucleoside phosphorylase (Moorella thermoacetica (strain ATCC 39073 / JCM 9320)).